Reading from the N-terminus, the 574-residue chain is Efflux pump FUB11 (574 aa).

The disordered stretch occupies residues 1–44 (MAIDPQPSSPSLSSETIANDTIGNDNNVNEPSVEPKTQEHQHTV). Over residues 9–30 (SPSLSSETIANDTIGNDNNVNE) the composition is skewed to polar residues. A glycan (N-linked (GlcNAc...) asparagine) is linked at N19. 11 consecutive transmembrane segments (helical) span residues 116-136 (VATL…LIWA), 148-168 (FFFT…AGSI), 176-196 (FLTG…IADM), 208-228 (MFSG…GFLG), 235-255 (WLHG…TVFI), 318-338 (IYIS…PIVF), 348-368 (IGGL…ISFA), 394-414 (AIMG…TTFA), 419-439 (IVPI…FMAL), 449-469 (IFAA…GAAF), and 484-504 (WASS…FLFY). Residues 552–574 (HNSHTSATHSHGHRRSLSCTRSV) form a disordered region.

Belongs to the major facilitator superfamily. DHA1 family. Polyamines/proton antiporter (TC 2.A.1.2.16) subfamily.

It localises to the cell membrane. In terms of biological role, efflux pump involved in export of fusaric acid, a mycotoxin with low to moderate toxicity to animals and humans, but with high phytotoxic properties. Constitutes a self-protecting mechanism of the fungus against critical levels of fusaric acid within the cell. The protein is Efflux pump FUB11 of Gibberella fujikuroi (strain CBS 195.34 / IMI 58289 / NRRL A-6831) (Bakanae and foot rot disease fungus).